A 353-amino-acid polypeptide reads, in one-letter code: MRKRISAIIMTLFMVLASCSNQLEAEKLAAESKNTFFDSLVKIGQGFQDIFGIFGNAIGDALGFNAVKSDDKRSKVGEHFEGVGKGLKDTKIKLDELLKEVTAAPHADTTEVKSVINSASAVLTKLIDSVTKLAGAVGNTDIADGVSIANGAAAEEASVKTVIEGVKEIIDVATNSGVKIEKGNAGTAVANANGPKAIIHNAQAAAGDATKLADEVAKADPWAMIDKIKNAKTKNGIAAANDDAGQLATATNAANNNGTAATNADLAAAVALKAMAKGGKFTQPAANEDGAVKAAAASAVNKVLGILDVIIRKAVNLELGKIKEAVKGIKYSEATGEATESDTAQPITNKSSN.

An N-terminal signal peptide occupies residues 1 to 18 (MRKRISAIIMTLFMVLAS). C19 carries N-palmitoyl cysteine lipidation. A lipid anchor (S-diacylglycerol cysteine) is attached at C19.

The protein belongs to the variable large protein (Vlp) family. Beta subfamily.

It is found in the cell outer membrane. The Vlp and Vsp proteins are antigenically distinct proteins, only one vlp or vsp gene is transcriptionally active at any one time. Switching between these genes is a mechanism of host immune response evasion. This chain is Variable large protein 12, found in Borrelia hermsii.